A 211-amino-acid polypeptide reads, in one-letter code: Holliday junction branch migration complex subunit RuvA (211 aa).

Positions 1 to 63 are domain I; it reads MIASLRGTVI…EDSQTLYVFK (63 aa). Residues 64–142 form a domain II region; sequence DADEKRAFAT…DLGEIADTGA (79 aa). The interval 143-157 is flexible linker; that stretch reads VGAAGAVGDGGDGQA. Residues 158 to 211 form a domain III region; sequence VAPDVREQVLEALVGLGFTESKAGTTIEAVLSQWSAPQAPDASGLLRASLAAIK.

It belongs to the RuvA family. As to quaternary structure, homotetramer. Forms an RuvA(8)-RuvB(12)-Holliday junction (HJ) complex. HJ DNA is sandwiched between 2 RuvA tetramers; dsDNA enters through RuvA and exits via RuvB. An RuvB hexamer assembles on each DNA strand where it exits the tetramer. Each RuvB hexamer is contacted by two RuvA subunits (via domain III) on 2 adjacent RuvB subunits; this complex drives branch migration. In the full resolvosome a probable DNA-RuvA(4)-RuvB(12)-RuvC(2) complex forms which resolves the HJ.

Its subcellular location is the cytoplasm. Functionally, the RuvA-RuvB-RuvC complex processes Holliday junction (HJ) DNA during genetic recombination and DNA repair, while the RuvA-RuvB complex plays an important role in the rescue of blocked DNA replication forks via replication fork reversal (RFR). RuvA specifically binds to HJ cruciform DNA, conferring on it an open structure. The RuvB hexamer acts as an ATP-dependent pump, pulling dsDNA into and through the RuvAB complex. HJ branch migration allows RuvC to scan DNA until it finds its consensus sequence, where it cleaves and resolves the cruciform DNA. The chain is Holliday junction branch migration complex subunit RuvA from Corynebacterium jeikeium (strain K411).